The chain runs to 1091 residues: Voltage-dependent calcium channel subunit alpha-2/delta-3 (1091 aa).

Residues 1–28 (MAGPGSPRRASRGASALLAAALLYAALG) form the signal peptide. The Extracellular segment spans residues 29–1068 (DVVRSEQQIP…HPEENARECG (1040 aa)). Asparagine 166 carries N-linked (GlcNAc...) asparagine glycosylation. The VWFA domain maps to 256–438 (DVVILVDVSG…ENVMEYLHVL (183 aa)). A divalent metal cation is bound by residues aspartate 262, serine 264, and serine 266. The MIDAS-like motif motif lies at 262–266 (DVSGS). N-linked (GlcNAc...) asparagine glycosylation is present at asparagine 309. Cysteine 412 and cysteine 1055 form a disulfide bridge. The region spanning 452 to 549 (WTEAYIDSTL…RLLYEEGKKR (98 aa)) is the Cache domain. Asparagine 553, asparagine 632, and asparagine 793 each carry an N-linked (GlcNAc...) asparagine glycan. Tyrosine 924 bears the Phosphotyrosine mark. A helical transmembrane segment spans residues 1069 to 1089 (GAPSLQAQTVLLLLPLLLMLF). Topologically, residues 1090–1091 (SR) are cytoplasmic.

This sequence belongs to the calcium channel subunit alpha-2/delta family. In terms of assembly, dimer formed of alpha-2-2 and delta-2 chains; disulfide-linked. Voltage-dependent calcium channels are multisubunit complexes, consisting of alpha-1 (CACNA1), alpha-2 (CACNA2D), beta (CACNB) and delta (CACNA2D) subunits in a 1:1:1:1 ratio. N-glycosylated. Post-translationally, may be proteolytically processed into subunits alpha-2-3 and delta-3 that are disulfide-linked. It is however unclear whether such cleavage really takes place in vivo and has a functional role. In terms of tissue distribution, only detected in brain. Not present in lung, testis, aorta, spleen, jejunum, ventricular muscle and kidney (at protein level). According to PubMed:11687876, it is brain-specific, while according to PubMed:11245980, it is widely expressed.

Its subcellular location is the membrane. Its function is as follows. The alpha-2/delta subunit of voltage-dependent calcium channels regulates calcium current density and activation/inactivation kinetics of the calcium channel. Acts as a regulatory subunit for P/Q-type calcium channel (CACNA1A), N-type (CACNA1B), L-type (CACNA1C OR CACNA1D) but not T-type (CACNA1G). The polypeptide is Voltage-dependent calcium channel subunit alpha-2/delta-3 (CACNA2D3) (Homo sapiens (Human)).